The sequence spans 235 residues: Probable RNA 2'-phosphotransferase (235 aa).

It belongs to the KptA/TPT1 family.

Functionally, removes the 2'-phosphate from RNA via an intermediate in which the phosphate is ADP-ribosylated by NAD followed by a presumed transesterification to release the RNA and generate ADP-ribose 1''-2''-cyclic phosphate (APPR&gt;P). May function as an ADP-ribosylase. The protein is Probable RNA 2'-phosphotransferase of Thermoplasma volcanium (strain ATCC 51530 / DSM 4299 / JCM 9571 / NBRC 15438 / GSS1).